The chain runs to 78 residues: Small ribosomal subunit protein bS18 (78 aa).

This sequence belongs to the bacterial ribosomal protein bS18 family. Part of the 30S ribosomal subunit. Forms a tight heterodimer with protein bS6.

In terms of biological role, binds as a heterodimer with protein bS6 to the central domain of the 16S rRNA, where it helps stabilize the platform of the 30S subunit. The protein is Small ribosomal subunit protein bS18 of Frankia casuarinae (strain DSM 45818 / CECT 9043 / HFP020203 / CcI3).